A 213-amino-acid chain; its full sequence is Pyridoxine/pyridoxamine 5'-phosphate oxidase (213 aa).

Substrate is bound by residues 8 to 11 (RREY) and K67. FMN-binding positions include 62–67 (RIVLLK), 77–78 (FT), R83, K84, and Q106. The substrate site is built by Y124, R128, and S132. FMN-binding positions include 141-142 (QS) and W186. 192–194 (RLH) serves as a coordination point for substrate. Residue R196 participates in FMN binding.

The protein belongs to the pyridoxamine 5'-phosphate oxidase family. In terms of assembly, homodimer. FMN serves as cofactor.

The enzyme catalyses pyridoxamine 5'-phosphate + O2 + H2O = pyridoxal 5'-phosphate + H2O2 + NH4(+). It catalyses the reaction pyridoxine 5'-phosphate + O2 = pyridoxal 5'-phosphate + H2O2. Its pathway is cofactor metabolism; pyridoxal 5'-phosphate salvage; pyridoxal 5'-phosphate from pyridoxamine 5'-phosphate: step 1/1. It participates in cofactor metabolism; pyridoxal 5'-phosphate salvage; pyridoxal 5'-phosphate from pyridoxine 5'-phosphate: step 1/1. In terms of biological role, catalyzes the oxidation of either pyridoxine 5'-phosphate (PNP) or pyridoxamine 5'-phosphate (PMP) into pyridoxal 5'-phosphate (PLP). The chain is Pyridoxine/pyridoxamine 5'-phosphate oxidase from Shewanella woodyi (strain ATCC 51908 / MS32).